The chain runs to 75 residues: Putative antitoxin VapB29 (75 aa).

In terms of biological role, possibly the antitoxic component of a type II toxin-antitoxin (TA) system. Its cognate toxin is VapC29 (Potential). The polypeptide is Putative antitoxin VapB29 (vapB29) (Mycobacterium tuberculosis (strain CDC 1551 / Oshkosh)).